The primary structure comprises 1265 residues: Cohesin subunit SA-1 (1265 aa).

The segment covering 1-16 has biased composition (polar residues); it reads MITSELSVLQDSTNES. 2 disordered regions span residues 1–21 and 37–91; these read MITS…VMHT and DLEV…EGDP. The segment covering 62–73 has biased composition (basic and acidic residues); the sequence is TPGDRSRAEPGS. The region spanning 303 to 388 is the SCD domain; sequence FVHRYRDAIA…NRFKDRIVSM (86 aa). Disordered regions lie at residues 1063 to 1097 and 1111 to 1130; these read GDED…KRVI and DTIQ…TVLR. The span at 1069–1082 shows a compositional bias: low complexity; that stretch reads SVNSGGSNSKGSSV. Residues 1083–1095 show a composition bias toward basic residues; that stretch reads RSKKGRPPLHKKR. A compositionally biased stretch (polar residues) spans 1111 to 1129; that stretch reads DTIQTPGALTTPQLTSTVL.

The protein belongs to the SCC3 family. In terms of assembly, interacts directly with RAD21 in cohesin complex. Cohesin complexes are composed of a heterodimer between and SMC3, which are attached via their hinge domain, and RAD21 which link them at their heads, and one STAG protein (STAG1 OR STAG2). In cohesin complexes, STAG1 is mutually exclusive with STAG2. In terms of processing, phosphorylated by PLK1. The large dissociation of cohesin from chromosome arms during prophase is partly due to its phosphorylation.

It localises to the nucleus. It is found in the chromosome. Its subcellular location is the centromere. Component of cohesin complex, a complex required for the cohesion of sister chromatids after DNA replication. The cohesin complex apparently forms a large proteinaceous ring within which sister chromatids can be trapped. At anaphase, the complex is cleaved and dissociates from chromatin, allowing sister chromatids to segregate. The cohesin complex may also play a role in spindle pole assembly during mitosis. The polypeptide is Cohesin subunit SA-1 (stag1) (Xenopus laevis (African clawed frog)).